The chain runs to 22 residues: NDMA-dependent alcohol dehydrogenase (22 aa).

Belongs to the zinc-containing alcohol dehydrogenase family. Homotetramer. It depends on NADH as a cofactor.

It is found in the cytoplasm. It carries out the reaction N,N-dimethyl-4-nitrosoaniline + a primary alcohol = 4-(hydroxylamino)-N,N-dimethylaniline + an aldehyde. The enzyme catalyses ethanol + A = acetaldehyde + AH2. In terms of biological role, this is a novel enzyme, catalytically different from common alcohol dehydrogenases. It is effective in oxidizing ethanol, other primary alcohols and benzylalcohol only in the presence of p-nitroso-N,N-dimethylaniline (NDMA) as an electron acceptor. NADH acts as a cofactor here instead of as a coenzyme. The sequence is that of NDMA-dependent alcohol dehydrogenase from Rhodococcus erythropolis (Arthrobacter picolinophilus).